Here is a 63-residue protein sequence, read N- to C-terminus: Lysis protein (63 aa).

The chain crosses the membrane as a helical span at residues 21–43; the sequence is LYVWIALAIVLSDFTSIFSHWIW.

This sequence belongs to the Leviviricetes lysis protein family.

Its subcellular location is the host cell inner membrane. It localises to the host cell outer membrane. In terms of biological role, induces the formation of specific membrane adhesion sites between the inner and outer membranes, apparently leading to host cell lysis. Lysis may be performed via activation of host murein hydrolases. The protein is Lysis protein of Escherichia coli (Bacteriophage JP34).